The chain runs to 154 residues: Prefoldin subunit 2 (154 aa).

Over residues 1–18 (MAENGGRAGKSSGSGTGK) the composition is skewed to gly residues. Disordered stretches follow at residues 1–20 (MAEN…GKGA) and 124–154 (IRLM…VLVS). Residues 124–139 (IRLMGEDEKPAAKENS) are compositionally biased toward basic and acidic residues. Low complexity predominate over residues 140 to 154 (EGAGAKASSAGVLVS).

Belongs to the prefoldin subunit beta family. Heterohexamer of two PFD-alpha type and four PFD-beta type subunits. Component of the PAQosome complex which is responsible for the biogenesis of several protein complexes and which consists of R2TP complex members RUVBL1, RUVBL2, RPAP3 and PIH1D1, URI complex members PFDN2, PFDN6, PDRG1, UXT and URI1 as well as ASDURF, POLR2E and DNAAF10/WDR92. Interacts with URI1; the interaction is phosphorylation-dependent and occurs in a growth-dependent manner.

It is found in the nucleus. It localises to the cytoplasm. The protein localises to the mitochondrion. Binds specifically to cytosolic chaperonin (c-CPN) and transfers target proteins to it. Binds to nascent polypeptide chain and promotes folding in an environment in which there are many competing pathways for nonnative proteins. This chain is Prefoldin subunit 2 (PFDN2), found in Bos taurus (Bovine).